The following is a 44-amino-acid chain: Protein PsbN (44 aa).

The helical transmembrane segment at 6–26 threads the bilayer; sequence FFFTFFLWFLLLSATGYSIYV.

Belongs to the PsbN family.

It localises to the plastid. Its subcellular location is the chloroplast thylakoid membrane. May play a role in photosystem I and II biogenesis. The sequence is that of Protein PsbN from Tetradesmus obliquus (Green alga).